The following is a 362-amino-acid chain: Probable tocopherol O-methyltransferase, chloroplastic (362 aa).

A chloroplast-targeting transit peptide spans 1–55; it reads MAHAAAATGALAPLHPLLRCTSRHLCASASPRAGLCLHHHRRRRRSSRRTKLAVR. The SAM motif I stretch occupies residues 141-150; sequence VVDVGCGIGG. The SAM motif II stretch occupies residues 204-212; sequence GQFDLVWSM. The interval 231 to 240 is SAM motif III; the sequence is VAAPGARIII.

This sequence belongs to the class I-like SAM-binding methyltransferase superfamily. gTMT family.

Its subcellular location is the plastid. The protein resides in the chloroplast. It catalyses the reaction gamma-tocopherol + S-adenosyl-L-methionine = (+)-alpha-tocopherol + S-adenosyl-L-homocysteine + H(+). It carries out the reaction delta-tocotrienol + S-adenosyl-L-methionine = beta-tocotrienol + S-adenosyl-L-homocysteine + H(+). The enzyme catalyses gamma-tocotrienol + S-adenosyl-L-methionine = alpha-tocotrienol + S-adenosyl-L-homocysteine + H(+). The catalysed reaction is delta-tocopherol + S-adenosyl-L-methionine = beta-tocopherol + S-adenosyl-L-homocysteine + H(+). It functions in the pathway cofactor biosynthesis; tocopherol biosynthesis. In terms of biological role, involved in the synthesis of tocopherol (vitamin E). Methylates gamma- and delta-tocopherol to form beta- and alpha-tocopherol, respectively. The polypeptide is Probable tocopherol O-methyltransferase, chloroplastic (VTE4) (Oryza sativa subsp. japonica (Rice)).